A 635-amino-acid polypeptide reads, in one-letter code: Threonine--tRNA ligase (635 aa).

Residues 1-144 (MQLLLIHSDY…RTIRLEGAVP (144 aa)) form an editing domain region. Residues 215-514 (PHVELMRRLE…AEEGKVPNLP (300 aa)) are catalytic. Cys307, His359, and His483 together coordinate Zn(2+).

Belongs to the class-II aminoacyl-tRNA synthetase family. In terms of assembly, homodimer. It depends on Zn(2+) as a cofactor.

The protein localises to the cytoplasm. The enzyme catalyses tRNA(Thr) + L-threonine + ATP = L-threonyl-tRNA(Thr) + AMP + diphosphate + H(+). Its function is as follows. Catalyzes the attachment of threonine to tRNA(Thr) in a two-step reaction: L-threonine is first activated by ATP to form Thr-AMP and then transferred to the acceptor end of tRNA(Thr). Also edits incorrectly charged L-seryl-tRNA(Thr). The protein is Threonine--tRNA ligase of Methanococcoides burtonii (strain DSM 6242 / NBRC 107633 / OCM 468 / ACE-M).